The chain runs to 119 residues: Ribonuclease P protein component (119 aa).

This sequence belongs to the RnpA family. Consists of a catalytic RNA component (M1 or rnpB) and a protein subunit.

The catalysed reaction is Endonucleolytic cleavage of RNA, removing 5'-extranucleotides from tRNA precursor.. RNaseP catalyzes the removal of the 5'-leader sequence from pre-tRNA to produce the mature 5'-terminus. It can also cleave other RNA substrates such as 4.5S RNA. The protein component plays an auxiliary but essential role in vivo by binding to the 5'-leader sequence and broadening the substrate specificity of the ribozyme. The chain is Ribonuclease P protein component from Proteus mirabilis (strain HI4320).